Consider the following 235-residue polypeptide: Peroxynitrite isomerase 2 (235 aa).

A GXWXGXG motif is present at residues Gly82 to Gly88. Lys198 and His225 together coordinate heme b.

This sequence belongs to the nitrobindin family. As to quaternary structure, homodimer. The cofactor is heme b.

The catalysed reaction is peroxynitrite = nitrate. The protein operates within nitrogen metabolism. Heme-binding protein able to scavenge peroxynitrite and to protect free L-tyrosine against peroxynitrite-mediated nitration, by acting as a peroxynitrite isomerase that converts peroxynitrite to nitrate. Therefore, this protein likely plays a role in peroxynitrite sensing and in the detoxification of reactive nitrogen and oxygen species (RNS and ROS, respectively). Is able to bind nitric oxide (NO) in vitro, but may act as a sensor of peroxynitrite levels in vivo. This is Peroxynitrite isomerase 2 from Mycolicibacterium paratuberculosis (strain ATCC BAA-968 / K-10) (Mycobacterium paratuberculosis).